Here is a 143-residue protein sequence, read N- to C-terminus: UPF0201 protein Pcal_0593 (143 aa).

This sequence belongs to the UPF0201 family.

In Pyrobaculum calidifontis (strain DSM 21063 / JCM 11548 / VA1), this protein is UPF0201 protein Pcal_0593.